The following is a 649-amino-acid chain: Choline transporter-like protein 3 (649 aa).

Residues 33–53 form a helical membrane-spanning segment; sequence AWLFLFFLFWTGLVFIMGYSV. 2 N-linked (GlcNAc...) asparagine glycosylation sites follow: Asn-136 and Asn-151. 5 helical membrane passes run 213 to 233, 235 to 255, 284 to 304, 334 to 354, and 384 to 404; these read DTVLGLCILAFALSLAMMFTF, FITTLLVHIFIALIVLGLLFV, LLGFAIVSTVITAVLLILIYV, LWTFAILIFFWVLWVAVLLSL, and LIGLIWTSEFILACQQMAVAG. 3 N-linked (GlcNAc...) asparagine glycosylation sites follow: Asn-414, Asn-502, and Asn-520. The next 2 helical transmembrane spans lie at 533–553 and 562–582; these read FIIFLGKVLVVCFTVFGGLMA and VWAVPLLLVAFFAYLVAHSFL.

It belongs to the CTL (choline transporter-like) family.

Its subcellular location is the membrane. In Bos taurus (Bovine), this protein is Choline transporter-like protein 3 (SLC44A3).